A 434-amino-acid chain; its full sequence is MSTAEQTQSDIMHRFWHDDLAAADPEIAEAVSNELKRQQDKIELIASENIASKAVLEATGSVFTNKYAEGYPGKRYYGGCDYADVVETLAIERAKELFGCNFANVQPNSGSQMNQAVFLALLQPGDTFMGLDLNSGGHLTHGSPVNISGKWFNPVSYGVRKDDELIDMDEVAETAREHKPKLIICGGTAYSRLWDFPRFREIADEVDATLLCDMSHISGLVAGGAHPSPFPHAHIVTSTTHKSLRGPRSGIILWNDEDLTKPLNMAVFPGLQGGPLMHVVAAKAVAFREALRPDFRTYAHAVVENARALAASLEENGLRIVSGGTDNHSMLVDLTAKDVTGKAAEAGLDRAWLTCNKNGIPYDTRSPFVTSGIRLGTPAGTTRGFGPAEFRKVGALIAEVVDGLAKNGPEGDAQVEESVRGRVSELCSQFPVYP.

(6S)-5,6,7,8-tetrahydrofolate-binding positions include L133 and 137–139; that span reads GHL. K242 is subject to N6-(pyridoxal phosphate)lysine. 366–368 serves as a coordination point for (6S)-5,6,7,8-tetrahydrofolate; the sequence is SPF.

The protein belongs to the SHMT family. In terms of assembly, homodimer. Requires pyridoxal 5'-phosphate as cofactor.

The protein localises to the cytoplasm. The catalysed reaction is (6R)-5,10-methylene-5,6,7,8-tetrahydrofolate + glycine + H2O = (6S)-5,6,7,8-tetrahydrofolate + L-serine. The protein operates within one-carbon metabolism; tetrahydrofolate interconversion. It functions in the pathway amino-acid biosynthesis; glycine biosynthesis; glycine from L-serine: step 1/1. Functionally, catalyzes the reversible interconversion of serine and glycine with tetrahydrofolate (THF) serving as the one-carbon carrier. This reaction serves as the major source of one-carbon groups required for the biosynthesis of purines, thymidylate, methionine, and other important biomolecules. Also exhibits THF-independent aldolase activity toward beta-hydroxyamino acids, producing glycine and aldehydes, via a retro-aldol mechanism. This Erythrobacter litoralis (strain HTCC2594) protein is Serine hydroxymethyltransferase.